The sequence spans 82 residues: Small ribosomal subunit protein eS27 (82 aa).

Positions 37, 40, 56, and 59 each coordinate Zn(2+).

The protein belongs to the eukaryotic ribosomal protein eS27 family. As to quaternary structure, component of the small ribosomal subunit. Mature ribosomes consist of a small (40S) and a large (60S) subunit. The 40S subunit contains about 32 different proteins and 1 molecule of RNA (18S). The 60S subunit contains 45 different proteins and 3 molecules of RNA (25S, 5.8S and 5S). Zn(2+) is required as a cofactor.

The protein resides in the cytoplasm. Functionally, component of the ribosome, a large ribonucleoprotein complex responsible for the synthesis of proteins in the cell. The small ribosomal subunit (SSU) binds messenger RNAs (mRNAs) and translates the encoded message by selecting cognate aminoacyl-transfer RNA (tRNA) molecules. The large subunit (LSU) contains the ribosomal catalytic site termed the peptidyl transferase center (PTC), which catalyzes the formation of peptide bonds, thereby polymerizing the amino acids delivered by tRNAs into a polypeptide chain. The nascent polypeptides leave the ribosome through a tunnel in the LSU and interact with protein factors that function in enzymatic processing, targeting, and the membrane insertion of nascent chains at the exit of the ribosomal tunnel. The protein is Small ribosomal subunit protein eS27 (RPS27) of Candida albicans (strain SC5314 / ATCC MYA-2876) (Yeast).